Reading from the N-terminus, the 490-residue chain is Protein dead ringer homolog (490 aa).

Basic and acidic residues predominate over residues 1-33 (MVEDQRRQLMEEEDEERRLILEEQRRRMMRADR). 2 disordered regions span residues 1–77 (MVED…AHID) and 106–135 (ITQS…HGGS). A compositionally biased stretch (acidic residues) spans 34–50 (DEEEEEEEEEEEEEREE). The segment covering 51 to 76 (DDGRRSEDEMREDEPPGRRETSHAHI) has biased composition (basic and acidic residues). The segment covering 106–117 (ITQSPPLTNGSN) has biased composition (polar residues). Residues 202–294 (DSKRKEFLDD…YLYPYECEKK (93 aa)) form the ARID domain. The interval 298 to 369 (SPSELQSAID…PPRLSPSTSP (72 aa)) is disordered. Residues 316–325 (PSYHSPHMHP) show a composition bias toward basic residues. An REKLES domain is found at 389–479 (AAMLAELAER…GVLYPRGGTR (91 aa)).

The protein localises to the nucleus. Its function is as follows. Transcription factor involved in skeletogenesis and oral ectoderm patterning. In Strongylocentrotus purpuratus (Purple sea urchin), this protein is Protein dead ringer homolog (dri).